The primary structure comprises 342 residues: Cathepsin B-like cysteine proteinase (342 aa).

The N-terminal stretch at 1 to 17 (MLKIAVYIVSLFTFLEA) is a signal peptide. A propeptide spans 18 to 89 (HVTTRNNQRI…TVDHHDLNVE (72 aa)) (activation peptide). 6 disulfide bridges follow: Cys-103/Cys-132, Cys-115/Cys-159, Cys-151/Cys-217, Cys-152/Cys-155, Cys-188/Cys-221, and Cys-196/Cys-207. Cys-118 is an active-site residue. Catalysis depends on residues His-288 and Asn-308.

The protein belongs to the peptidase C1 family. In terms of tissue distribution, intestine (gut).

Thiol protease. Has a role as a digestive enzyme. The chain is Cathepsin B-like cysteine proteinase (CATB) from Schistosoma japonicum (Blood fluke).